We begin with the raw amino-acid sequence, 501 residues long: Ribose import ATP-binding protein RbsA (501 aa).

2 ABC transporter domains span residues 5 to 241 and 252 to 495; these read LQLQ…VGRK and APGE…VGKQ. 37 to 44 provides a ligand contact to ATP; it reads GENGAGKS.

The protein belongs to the ABC transporter superfamily. Ribose importer (TC 3.A.1.2.1) family. In terms of assembly, the complex is composed of an ATP-binding protein (RbsA), two transmembrane proteins (RbsC) and a solute-binding protein (RbsB).

It is found in the cell inner membrane. The enzyme catalyses D-ribose(out) + ATP + H2O = D-ribose(in) + ADP + phosphate + H(+). Its function is as follows. Part of the ABC transporter complex RbsABC involved in ribose import. Responsible for energy coupling to the transport system. The polypeptide is Ribose import ATP-binding protein RbsA (Pectobacterium atrosepticum (strain SCRI 1043 / ATCC BAA-672) (Erwinia carotovora subsp. atroseptica)).